The sequence spans 249 residues: 3-deoxy-D-manno-octulosonic acid kinase (249 aa).

The active site involves aspartate 175.

This sequence belongs to the protein kinase superfamily. KdkA/RfaP family.

It localises to the cell inner membrane. It catalyses the reaction an alpha-Kdo-(2-&gt;6)-lipid IVA + ATP = a 4-O-phospho-alpha-Kdo-(2-&gt;6)-lipid IVA + ADP + H(+). It functions in the pathway bacterial outer membrane biogenesis; LPS core biosynthesis. Functionally, catalyzes the ATP-dependent phosphorylation of the 3-deoxy-D-manno-octulosonic acid (Kdo) residue in Kdo-lipid IV(A) at the 4-OH position. This is 3-deoxy-D-manno-octulosonic acid kinase from Xanthomonas campestris pv. campestris (strain 8004).